The sequence spans 217 residues: Uracil-DNA glycosylase (217 aa).

Residue D62 is the Proton acceptor of the active site.

It belongs to the uracil-DNA glycosylase (UDG) superfamily. UNG family.

It localises to the cytoplasm. The enzyme catalyses Hydrolyzes single-stranded DNA or mismatched double-stranded DNA and polynucleotides, releasing free uracil.. Excises uracil residues from the DNA which can arise as a result of misincorporation of dUMP residues by DNA polymerase or due to deamination of cytosine. The sequence is that of Uracil-DNA glycosylase from Streptococcus pneumoniae (strain JJA).